The primary structure comprises 148 residues: Hemoglobin subunit beta (148 aa).

A Globin domain is found at 3–148 (DWTDAERSAI…VVSALGRQYH (146 aa)). Residues His-64 and His-93 each contribute to the heme b site.

Belongs to the globin family. Heterotetramer of two alpha chains and two beta chains. Red blood cells.

Involved in oxygen transport from gills to the various peripheral tissues. The sequence is that of Hemoglobin subunit beta (hbb) from Oncorhynchus nerka (Sockeye salmon).